Reading from the N-terminus, the 335-residue chain is 5-dehydro-2-deoxygluconokinase (335 aa).

Belongs to the carbohydrate kinase PfkB family.

It carries out the reaction 5-dehydro-2-deoxy-D-gluconate + ATP = 6-phospho-5-dehydro-2-deoxy-D-gluconate + ADP + H(+). The protein operates within polyol metabolism; myo-inositol degradation into acetyl-CoA; acetyl-CoA from myo-inositol: step 5/7. Functionally, catalyzes the phosphorylation of 5-dehydro-2-deoxy-D-gluconate (2-deoxy-5-keto-D-gluconate or DKG) to 6-phospho-5-dehydro-2-deoxy-D-gluconate (DKGP). This is 5-dehydro-2-deoxygluconokinase from Geobacillus kaustophilus (strain HTA426).